A 239-amino-acid chain; its full sequence is Phosphoribosylaminoimidazole-succinocarboxamide synthase (239 aa).

This sequence belongs to the SAICAR synthetase family.

The catalysed reaction is 5-amino-1-(5-phospho-D-ribosyl)imidazole-4-carboxylate + L-aspartate + ATP = (2S)-2-[5-amino-1-(5-phospho-beta-D-ribosyl)imidazole-4-carboxamido]succinate + ADP + phosphate + 2 H(+). Its pathway is purine metabolism; IMP biosynthesis via de novo pathway; 5-amino-1-(5-phospho-D-ribosyl)imidazole-4-carboxamide from 5-amino-1-(5-phospho-D-ribosyl)imidazole-4-carboxylate: step 1/2. The protein is Phosphoribosylaminoimidazole-succinocarboxamide synthase of Brevibacillus brevis (strain 47 / JCM 6285 / NBRC 100599).